The chain runs to 124 residues: Ribonuclease pancreatic (124 aa).

Over residues 1–13 (KETAAAKFERQHI) the composition is skewed to basic and acidic residues. Residues 1–24 (KETAAAKFERQHIDSNPSSVSSSN) are disordered. Substrate-binding residues include lysine 7 and arginine 10. The active-site Proton acceptor is the histidine 12. Residues 15–24 (SNPSSVSSSN) are compositionally biased toward low complexity. 4 disulfides stabilise this stretch: cysteine 26–cysteine 84, cysteine 40–cysteine 95, cysteine 58–cysteine 110, and cysteine 65–cysteine 72. An N-linked (GlcNAc...) asparagine; partial glycan is attached at asparagine 34. Substrate contacts are provided by residues 41–45 (KPVNT), lysine 66, and arginine 85. Histidine 119 serves as the catalytic Proton donor.

The protein belongs to the pancreatic ribonuclease family. Monomer. Interacts with and forms tight 1:1 complexes with RNH1. Dimerization of two such complexes may occur. Interaction with RNH1 inhibits this protein. In terms of tissue distribution, pancreas.

It localises to the secreted. It carries out the reaction an [RNA] containing cytidine + H2O = an [RNA]-3'-cytidine-3'-phosphate + a 5'-hydroxy-ribonucleotide-3'-[RNA].. The catalysed reaction is an [RNA] containing uridine + H2O = an [RNA]-3'-uridine-3'-phosphate + a 5'-hydroxy-ribonucleotide-3'-[RNA].. In terms of biological role, endonuclease that catalyzes the cleavage of RNA on the 3' side of pyrimidine nucleotides. Acts on single-stranded and double-stranded RNA. In Antilocapra americana (Pronghorn), this protein is Ribonuclease pancreatic (RNASE1).